We begin with the raw amino-acid sequence, 259 residues long: TCF3 fusion partner homolog (259 aa).

Disordered regions lie at residues 50-72 (GGLG…GRRR) and 141-210 (EDDG…APVQ). Phosphoserine is present on Ser167. Residues 167–178 (SPSQRTTATLDP) are compositionally biased toward polar residues. At Thr172 the chain carries Phosphothreonine. 2 positions are modified to phosphoserine: Ser180 and Ser188. Thr203 carries the post-translational modification Phosphothreonine. Lys222 participates in a covalent cross-link: Glycyl lysine isopeptide (Lys-Gly) (interchain with G-Cter in SUMO2). Position 255 is a phosphoserine (Ser255).

As to quaternary structure, interacts with NOL3; translocates NOL3 into the nucleus and negatively regulated TFPT-induced cell death. Component of the chromatin remodeling INO80 complex; specifically part of a complex module associated with the N-terminus of INO80.

Its subcellular location is the nucleus. Its function is as follows. Appears to promote apoptosis in a p53/TP53-independent manner. Functionally, putative regulatory component of the chromatin remodeling INO80 complex which is involved in transcriptional regulation, DNA replication and probably DNA repair. The chain is TCF3 fusion partner homolog (Tfpt) from Mus musculus (Mouse).